We begin with the raw amino-acid sequence, 71 residues long: MAFLKKSLLLVLFLALVPLSICEEEKREEEDEEKQEDDDQSENKRGLLSGILNSAGGLLGNLIGSLSNGES.

Residues 1-22 (MAFLKKSLLLVLFLALVPLSIC) form the signal peptide. The propeptide occupies 23 to 45 (EEEKREEEDEEKQEDDDQSENKR). The segment at 25–46 (EKREEEDEEKQEDDDQSENKRG) is disordered. Residues 26–40 (KREEEDEEKQEDDDQ) show a composition bias toward acidic residues. Position 68 is an asparagine amide (Asn-68). Positions 70 to 71 (ES) are excised as a propeptide.

The protein belongs to the frog skin active peptide (FSAP) family. Plasticin subfamily. As to expression, expressed by the skin glands.

The protein localises to the secreted. It is found in the target cell membrane. Its function is as follows. Neutral peptide with no antimicrobial activity. May act in synergy with cationic peptides by enhancing their activity. Has a moderate hemolytic activity. The sequence is that of Plasticin-C2 from Agalychnis callidryas (Red-eyed tree frog).